Reading from the N-terminus, the 231-residue chain is Dihydropteridine reductase (231 aa).

6–30 (LVLGGSGALGAEVVKFFKSKSWNTI) contacts NADP(+). Tyr-138 (proton acceptor) is an active-site residue.

It belongs to the short-chain dehydrogenases/reductases (SDR) family. As to quaternary structure, homodimer.

It carries out the reaction 5,6,7,8-tetrahydropteridine + NAD(+) = 6,7-dihydropteridine + NADH + H(+). The catalysed reaction is 5,6,7,8-tetrahydropteridine + NADP(+) = 6,7-dihydropteridine + NADPH + H(+). Its function is as follows. The product of this enzyme, tetrahydrobiopterin (BH-4), is an essential cofactor for phenylalanine, tyrosine, and tryptophan hydroxylases. This Dictyostelium discoideum (Social amoeba) protein is Dihydropteridine reductase (qdpr).